We begin with the raw amino-acid sequence, 490 residues long: Bifunctional protein HldE (490 aa).

A ribokinase region spans residues 1-330; the sequence is MFSFDALLQA…RRILPHASLA (330 aa). 205 to 208 lines the ATP pocket; it reads NRKE. Asp275 is an active-site residue. Residues 358–490 form a cytidylyltransferase region; it reads FTNGCFDILH…LVARAREGQS (133 aa).

In the N-terminal section; belongs to the carbohydrate kinase PfkB family. It in the C-terminal section; belongs to the cytidylyltransferase family. Homodimer.

It carries out the reaction D-glycero-beta-D-manno-heptose 7-phosphate + ATP = D-glycero-beta-D-manno-heptose 1,7-bisphosphate + ADP + H(+). It catalyses the reaction D-glycero-beta-D-manno-heptose 1-phosphate + ATP + H(+) = ADP-D-glycero-beta-D-manno-heptose + diphosphate. It participates in nucleotide-sugar biosynthesis; ADP-L-glycero-beta-D-manno-heptose biosynthesis; ADP-L-glycero-beta-D-manno-heptose from D-glycero-beta-D-manno-heptose 7-phosphate: step 1/4. It functions in the pathway nucleotide-sugar biosynthesis; ADP-L-glycero-beta-D-manno-heptose biosynthesis; ADP-L-glycero-beta-D-manno-heptose from D-glycero-beta-D-manno-heptose 7-phosphate: step 3/4. Catalyzes the phosphorylation of D-glycero-D-manno-heptose 7-phosphate at the C-1 position to selectively form D-glycero-beta-D-manno-heptose-1,7-bisphosphate. Functionally, catalyzes the ADP transfer from ATP to D-glycero-beta-D-manno-heptose 1-phosphate, yielding ADP-D-glycero-beta-D-manno-heptose. The polypeptide is Bifunctional protein HldE (Rhodopseudomonas palustris (strain ATCC BAA-98 / CGA009)).